A 556-amino-acid polypeptide reads, in one-letter code: Formate--tetrahydrofolate ligase (556 aa).

65–72 lines the ATP pocket; that stretch reads TPAGEGKS.

Belongs to the formate--tetrahydrofolate ligase family.

It catalyses the reaction (6S)-5,6,7,8-tetrahydrofolate + formate + ATP = (6R)-10-formyltetrahydrofolate + ADP + phosphate. Its pathway is one-carbon metabolism; tetrahydrofolate interconversion. The protein is Formate--tetrahydrofolate ligase of Streptococcus pneumoniae (strain ATCC 700669 / Spain 23F-1).